A 740-amino-acid polypeptide reads, in one-letter code: E3 ubiquitin-protein ligase DTX3L (740 aa).

At Ala2 the chain carries N-acetylalanine. A Phosphoserine modification is found at Ser9. Disordered stretches follow at residues 96–119 (NTRPQISSLTQSQAETPSGDMHQH), 195–231 (SEQKQQFSPSMTERKPLSQQERDSCISPSEPETKAEQ), and 524–551 (HETPMDIDSDDSKAASPPLKGSVSSEAS). 2 stretches are compositionally biased toward polar residues: residues 98–111 (RPQISSLTQSQAET) and 195–205 (SEQKQQFSPSM). Phosphoserine is present on Ser202. Residues 206 to 218 (TERKPLSQQERDS) show a composition bias toward basic and acidic residues. Ser221, Ser532, and Ser539 each carry phosphoserine. The RING-type zinc finger occupies 561-600 (CVICMDTISNKKVLPKCKHEFCAPCINKAMSYKPICPTCQ).

This sequence belongs to the Deltex family. Homodimer and heterodimer. Can heterodimerize with DTX1, enhancing its ubiquitin ligase activity in vitro. Interacts (via N-terminus) with ADP ribosyltransferase PARP9/BAL1 (via PARP catalytic domain) forming a stable complex; the interaction is required to activate PARP9 but is dispensable for DTX3L catalytic activity. Forms a complex with STAT1 and PARP9 independently of IFNB1 or IFNG-mediated STAT1 'Tyr-701' phosphorylation. Found in a complex with PARP9, STAT1 and H2BC9. Found in a complex with E3 ligase ITCH and ESCRT-0 components HGS and STAM. Interacts (via C-terminus) with ITCH; the interaction is increased upon CXCL12 stimulation and inhibits ITCH catalytic activity; the interaction is direct. Interacts with HGS and STAM; the interaction brings together HGS and STAM and promotes their recruitment to early endosomes. As to quaternary structure, (Microbial infection) Interacts with encephalomyocarditis virus (EMCV) C3 protease; the interaction results in C3 protease 'Lys-48'-linked ubiquitination. In terms of assembly, (Microbial infection) Interacts with human rhinovirus (HRV) C3 protease; the interaction results in C3 protease 'Lys-48'-linked ubiquitination. Post-translationally, autoubiquitinated.

Its subcellular location is the cytoplasm. It localises to the nucleus. The protein resides in the early endosome membrane. It is found in the lysosome membrane. It catalyses the reaction S-ubiquitinyl-[E2 ubiquitin-conjugating enzyme]-L-cysteine + [acceptor protein]-L-lysine = [E2 ubiquitin-conjugating enzyme]-L-cysteine + N(6)-ubiquitinyl-[acceptor protein]-L-lysine.. Its pathway is protein modification; protein ubiquitination. Its activity is regulated as follows. Binding to PARP9 enhances DTX3L catalytic activity. E3 ubiquitin-protein ligase which, in association with ADP-ribosyltransferase PARP9, plays a role in DNA damage repair and in interferon-mediated antiviral responses. Monoubiquitinates several histones, including histone H2A, H2B, H3 and H4. In response to DNA damage, mediates monoubiquitination of 'Lys-91' of histone H4 (H4K91ub1). The exact role of H4K91ub1 in DNA damage response is still unclear but it may function as a licensing signal for additional histone H4 post-translational modifications such as H4 'Lys-20' methylation (H4K20me). PARP1-dependent PARP9-DTX3L-mediated ubiquitination promotes the rapid and specific recruitment of 53BP1/TP53BP1, UIMC1/RAP80, and BRCA1 to DNA damage sites. By monoubiquitinating histone H2B H2BC9/H2BJ and thereby promoting chromatin remodeling, positively regulates STAT1-dependent interferon-stimulated gene transcription and thus STAT1-mediated control of viral replication. Independently of its catalytic activity, promotes the sorting of chemokine receptor CXCR4 from early endosome to lysosome following CXCL12 stimulation by reducing E3 ligase ITCH activity and thus ITCH-mediated ubiquitination of endosomal sorting complex required for transport ESCRT-0 components HGS and STAM. In addition, required for the recruitment of HGS and STAM to early endosomes. In association with PARP9, plays a role in antiviral responses by mediating 'Lys-48'-linked ubiquitination of encephalomyocarditis virus (EMCV) and human rhinovirus (HRV) C3 proteases and thus promoting their proteasomal-mediated degradation. The polypeptide is E3 ubiquitin-protein ligase DTX3L (DTX3L) (Homo sapiens (Human)).